The chain runs to 118 residues: Large ribosomal subunit protein bL20 (118 aa).

It belongs to the bacterial ribosomal protein bL20 family.

Binds directly to 23S ribosomal RNA and is necessary for the in vitro assembly process of the 50S ribosomal subunit. It is not involved in the protein synthesizing functions of that subunit. This chain is Large ribosomal subunit protein bL20, found in Pseudoalteromonas atlantica (strain T6c / ATCC BAA-1087).